The primary structure comprises 282 residues: Glutamyl endopeptidase (282 aa).

Positions 1–27 (MKKRFLSICTMTIAALATTTMVNTSYA) are cleaved as a signal peptide. The propeptide occupies 28 to 66 (KTDTESHNHSSLGTENKNVLDINSSSHNIKPSQNKSYPS). Residues His-117, Asp-159, and Ser-235 each act as charge relay system in the active site.

The protein belongs to the peptidase S1B family. Monomer.

The protein resides in the secreted. It catalyses the reaction Preferential cleavage: Glu-|-Xaa, Asp-|-Xaa.. With respect to regulation, inhibited by diisopropyl fluorophosphate. Exhibits a significant hydrolytic activity for the carbonyl side of glutamic acid. Shows activity toward human fibronectin and type 1 collagen. This Staphylococcus epidermidis protein is Glutamyl endopeptidase (gseA).